Reading from the N-terminus, the 228-residue chain is DNA-binding response regulator MtrA (228 aa).

Positions 7–120 (RILVVDDDAS…ELVARVRARL (114 aa)) constitute a Response regulatory domain. Aspartate 56 carries the post-translational modification 4-aspartylphosphate. The segment at residues 128 to 227 (AEMLSIADVE…VRGVGYKAGP (100 aa)) is a DNA-binding region (ompR/PhoB-type).

Post-translationally, phosphorylated by MtrB.

In terms of biological role, member of the two-component regulatory system MtrA/MtrB. This chain is DNA-binding response regulator MtrA (mtrA), found in Mycobacterium bovis (strain ATCC BAA-935 / AF2122/97).